The following is a 173-amino-acid chain: Myosin light chain 5 (173 aa).

Residues 1–20 are disordered; the sequence is MASRKTKKKEGGALRAQRAS. 3 consecutive EF-hand domains span residues 30–65, 100–135, and 136–171; these read TQIQ…LGKT, DAEE…QADK, and MTAE…GEEK. The Ca(2+) site is built by aspartate 43, asparagine 45, aspartate 47, and aspartate 54.

As to quaternary structure, myosin is a hexamer of 2 heavy chains and 4 light chains. Expressed in fetal skeletal muscle and retina.

The polypeptide is Myosin light chain 5 (MYL5) (Homo sapiens (Human)).